Consider the following 434-residue polypeptide: MFS-type transporter pynF (434 aa).

The segment covering 1 to 13 (MSHDQRSPSEEVS) has biased composition (basic and acidic residues). Residues 1 to 34 (MSHDQRSPSEEVSRTALSKPASESTIVGDGHHPL) are disordered. The next 12 membrane-spanning stretches (helical) occupy residues 44–64 (WLVV…LNAF), 84–104 (IAWI…VVGP), 109–129 (VGAT…LMLT), 138–158 (LILA…YPTI), 171–191 (IALG…TEII), 203–223 (TVRA…VLII), 249–269 (LLFS…FFYL), 280–302 (VTGA…VLTG), 311–331 (FNVI…LHKI), 334–354 (SGAI…LISL), 375–395 (LMMG…GALL), and 402–422 (WYGF…VTIL).

This sequence belongs to the major facilitator superfamily. Monocarboxylate porter (TC 2.A.1.13) family.

Its subcellular location is the cell membrane. Its function is as follows. MFS-type transporter; part of the gene cluster that mediates the biosynthesis of pyranonigrins, a family of antioxidative compounds. May be involved in the secretion of pyranonigrins. The protein is MFS-type transporter pynF of Aspergillus niger (strain ATCC MYA-4892 / CBS 513.88 / FGSC A1513).